The following is a 536-amino-acid chain: uncharacterized protein (536 aa).

Residues 71–98 (LFVIVKSGCSCPSGRICRHMLAVFLYVY) form an SWIM-type zinc finger. Residues 482–528 (YKEAARYLKKLRTLYKKAKKQKVWERYIQLLSSHYKRLRALQEELQK) are a coiled coil.

This is an uncharacterized protein from Bacillus subtilis (strain 168).